Reading from the N-terminus, the 813-residue chain is G-type lectin S-receptor-like serine/threonine-protein kinase LECRK1 (813 aa).

Residues 1–19 form the signal peptide; that stretch reads MVALLLFPMLLQLLSPTCA. The Extracellular segment spans residues 20–466; that stretch reads QTQKNITLGS…NRKHWVLGSS (447 aa). The 128-residue stretch at 22-149 folds into the Bulb-type lectin domain; the sequence is QKNITLGSTL…DGTTKWQTFD (128 aa). N-linked (GlcNAc...) asparagine glycans are attached at residues N24, N57, N164, N168, N219, and N242. The EGF-like; atypical domain maps to 293–346; it reads PQNICHAIVSDVGSGVCGFNSYCTFDGTRNQIASCQCPPWYKFFDEQKKYKGCK. 5 cysteine pairs are disulfide-bonded: C297–C315, C309–C327, C329–C345, C391–C413, and C395–C401. The region spanning 354 to 433 is the PAN domain; it reads CDLEEATALA…NMADYVQRTV (80 aa). N407 and N441 each carry an N-linked (GlcNAc...) asparagine glycan. Residues 467–487 form a helical membrane-spanning segment; sequence LILGTSILVNFALISIFLFGT. At 488–813 the chain is on the cytoplasmic side; sequence YCRITTKKNI…DPCSFISSLP (326 aa). One can recognise a Protein kinase domain in the interval 523–797; that stretch reads AGFHEILGAG…KVTQMLDGAV (275 aa). Residues 529-537 and K553 contribute to the ATP site; that span reads LGAGASGVV. Catalysis depends on D647, which acts as the Proton acceptor.

This sequence belongs to the protein kinase superfamily. Ser/Thr protein kinase family. In terms of assembly, interacts (via kinase domain) with ADF4. In terms of tissue distribution, expressed in plumules, radicles and panicles.

The protein resides in the membrane. It catalyses the reaction L-seryl-[protein] + ATP = O-phospho-L-seryl-[protein] + ADP + H(+). It carries out the reaction L-threonyl-[protein] + ATP = O-phospho-L-threonyl-[protein] + ADP + H(+). Involved in innate immunity. Required for the expression of defense-related genes PR1A, LOX2 and CHS1 upon biotic stresses. Required for basal resistance to the fungal blast (M.grisea), bacterial blight (O.oryzae pv. oryzae, Xoo) and the herbivorous insect brown planthopper (N.lugens, BPH). May be involved in several defense signaling pathways. Involved in the promotion of seed germination. Required for the expression of alpha-amylase genes during seed germination. Involved in resistance against the brown planthopper (BPH). Member of the BPH3 (BPH resistance locus 3) cluster which contains LECRK1, LECRK2 and LECRK3. This chain is G-type lectin S-receptor-like serine/threonine-protein kinase LECRK1, found in Oryza sativa subsp. indica (Rice).